We begin with the raw amino-acid sequence, 245 residues long: 5-oxoprolinase subunit A (245 aa).

The protein belongs to the LamB/PxpA family. In terms of assembly, forms a complex composed of PxpA, PxpB and PxpC.

The enzyme catalyses 5-oxo-L-proline + ATP + 2 H2O = L-glutamate + ADP + phosphate + H(+). Its function is as follows. Catalyzes the cleavage of 5-oxoproline to form L-glutamate coupled to the hydrolysis of ATP to ADP and inorganic phosphate. This is 5-oxoprolinase subunit A from Cronobacter sakazakii (strain ATCC BAA-894) (Enterobacter sakazakii).